The sequence spans 183 residues: Ribulose bisphosphate carboxylase small subunit, chloroplastic 3 (183 aa).

Residues 1-43 (MATTMLNRSVIVNKEVAKTPNFPRATKNNKGFASNAAVQKCRD) constitute a chloroplast transit peptide.

The protein belongs to the RuBisCO small chain family. As to quaternary structure, heterohexadecamer of 8 large and 8 small subunits.

It is found in the plastid. It localises to the chloroplast. RuBisCO catalyzes two reactions: the carboxylation of D-ribulose 1,5-bisphosphate, the primary event in carbon dioxide fixation, as well as the oxidative fragmentation of the pentose substrate. Both reactions occur simultaneously and in competition at the same active site. Although the small subunit is not catalytic it is essential for maximal activity. This Acetabularia peniculus (Green alga) protein is Ribulose bisphosphate carboxylase small subunit, chloroplastic 3.